The following is a 111-amino-acid chain: MEKVLALVLLTLAVAYAAPDPRGLIINLDNGELCLNSAQCKSQCCQHDSPLGLARCADKARENSGCSPQTIYGIYYLCPCERGLTCDGDKSIIGAITNTNYGICQDPQSKK.

The signal sequence occupies residues 1–17 (MEKVLALVLLTLAVAYA). A propeptide spans 18-22 (APDPR) (enterostatin, activation peptide). 5 disulfide bridges follow: Cys34/Cys45, Cys40/Cys56, Cys44/Cys78, Cys66/Cys86, and Cys80/Cys104.

This sequence belongs to the colipase family. Forms a 1:1 stoichiometric complex with pancreatic lipase. In terms of tissue distribution, expressed by the pancreas.

It localises to the secreted. Its function is as follows. Colipase is a cofactor of pancreatic lipase. It allows the lipase to anchor itself to the lipid-water interface. Without colipase the enzyme is washed off by bile salts, which have an inhibitory effect on the lipase. Enterostatin has a biological activity as a satiety signal. This chain is Colipase (CLPS), found in Myocastor coypus (Coypu).